The sequence spans 926 residues: DNA mismatch repair protein MutS (926 aa).

The interval 1 to 60 (MAASQNPIQGSLFGGNEESDLNKAEKLKGSERSNVNLSHQQLKEDASLRPRIKQTPKNPN) is disordered. Residues 20-31 (DLNKAEKLKGSE) show a composition bias toward basic and acidic residues. ATP is bound at residue 726 to 733 (GPNASGKS).

This sequence belongs to the DNA mismatch repair MutS family.

Its function is as follows. This protein is involved in the repair of mismatches in DNA. It is possible that it carries out the mismatch recognition step. This protein has a weak ATPase activity. In Prochlorococcus marinus (strain NATL2A), this protein is DNA mismatch repair protein MutS.